Here is a 1427-residue protein sequence, read N- to C-terminus: Protein expanded (1427 aa).

Residues 26-399 (RFLALRLLGQ…DTHQWSMKLA (374 aa)) enclose the FERM domain. Residues 176-212 (GDAPPGTSNSKDDSGEETSASPSNGGRGLSATTTLPK) are disordered. Positions 192–211 (ETSASPSNGGRGLSATTTLP) are enriched in polar residues. 2 positions are modified to phosphotyrosine: tyrosine 227 and tyrosine 423. Disordered stretches follow at residues 520–566 (VRPQ…IGSQ) and 611–656 (NSAL…SGVY). Residues 524 to 544 (DASSNGATIVTNSSVQRNSMG) show a composition bias toward polar residues. Residues 545 to 559 (TTANDSSTATDSPSS) are compositionally biased toward low complexity. Tyrosine 679 bears the Phosphotyrosine mark. The span at 688–710 (EETHVQHSDSVDGKKKEDFRPRS) shows a compositional bias: basic and acidic residues. Disordered regions lie at residues 688 to 732 (EETH…DNKH), 766 to 792 (YVTL…YSAR), 815 to 880 (APKP…SLKS), 939 to 963 (HNSN…HRHS), and 1000 to 1022 (LAPP…HPHL). Tyrosine 766 carries the post-translational modification Phosphotyrosine. Residues 818–838 (PDSPPCSPPVPPAPIPAPPPA) are compositionally biased toward pro residues. Positions 842 to 847 (RDPPPY) match the RXPPXY motif motif. Polar residues predominate over residues 848–859 (SISSKPRPTSLI). The segment covering 860–877 (SVSSSAHPAPSAAGSMSS) has biased composition (low complexity). Residues 951–963 (LHHHHVPSHHRHS) show a composition bias toward basic residues. Residues 1001–1019 (APPPPSLPRQPPPPPPPNH) are compositionally biased toward pro residues. The short motif at 1008-1020 (PRQPPPPPPPNHP) is the SH3-binding element. At tyrosine 1103 the chain carries Phosphotyrosine. Positions 1149 to 1157 (PPPPPPLHP) match the SH3-binding motif. At serine 1181 the chain carries Phosphoserine. 2 disordered regions span residues 1190-1267 (DLLP…WAGE) and 1345-1398 (TGQE…LPVQ). Composition is skewed to pro residues over residues 1214 to 1230 (PPMP…PSKP) and 1237 to 1246 (PIPPRKPPTL). Polar residues-rich tracts occupy residues 1253 to 1262 (SPLTKTSSGA) and 1345 to 1370 (TGQE…SSAG). Basic residues predominate over residues 1376–1388 (KARKGSTVSHRHP).

As to quaternary structure, forms a complex with Kibra and Mer. Interacts (via RXPPXY motif) with Kibra (via domain WW 1). Interacts with Mer and Hpo (via SARAH domain). Interacts with Schip1; the interaction results in recruitment of Schip1 to the apical cell membrane. Interacts with ack and yki. In terms of processing, phosphorylated by Ack at several tyrosines including Tyr-227, Tyr-423, Tyr-679, Tyr-766 and Tyr-1103.

The protein resides in the apical cell membrane. In terms of biological role, activates the Hippo/SWH (Sav/Wts/Hpo) signaling pathway, a signaling pathway that plays a pivotal role in organ size control and tumor suppression by restricting proliferation and promoting apoptosis. The core of this pathway is composed of a kinase cascade wherein Hippo (Hpo), in complex with its regulatory protein Salvador (Sav), phosphorylates and activates Warts (Wts) in complex with its regulatory protein Mats, which in turn phosphorylates and inactivates the Yorkie (Yki) oncoprotein. Ex acts synergistically along with Mer and Kibra to regulate the Hippo signaling pathway. Involved in the control of cell proliferation in imaginal disks. May bind to certain proteins of signal transduction pathways by interaction with their SH3 domains. Required for apical localization of Schip1. In Drosophila melanogaster (Fruit fly), this protein is Protein expanded (ex).